Consider the following 255-residue polypeptide: MRRWALRLEYDGRGFVGWQRQENGLSVQEVLETAASRLCGGDVPDSVVAGRTDAGVHAAGQVAALELPDRLDARAVREALNFHMKPHAVAVIEAAPAPSAAWSPRFSAIGRAYRYLILNRSARPALRDGFVWHVKAPLDAPAMHEAAQSLLGRHDFTSFRASSCQANSPLRTLDRLDVRRDGETVVIEAEARSFLHHQVRNMVGTLKLVGEGRWRVGRVAEALAARDRSAAGPTAPPDGLVLVAVRYEVDPFPRN.

D53 (nucleophile) is an active-site residue. Y113 provides a ligand contact to substrate.

This sequence belongs to the tRNA pseudouridine synthase TruA family. As to quaternary structure, homodimer.

It carries out the reaction uridine(38/39/40) in tRNA = pseudouridine(38/39/40) in tRNA. In terms of biological role, formation of pseudouridine at positions 38, 39 and 40 in the anticodon stem and loop of transfer RNAs. The polypeptide is tRNA pseudouridine synthase A (Acidiphilium cryptum (strain JF-5)).